We begin with the raw amino-acid sequence, 204 residues long: uncharacterized protein (204 aa).

Its subcellular location is the mitochondrion. This is an uncharacterized protein from Arabidopsis thaliana (Mouse-ear cress).